Consider the following 282-residue polypeptide: Probable endonuclease 4 (282 aa).

Residues His-69, His-109, Glu-145, Asp-179, His-182, His-216, Asp-229, His-231, and Glu-261 each contribute to the Zn(2+) site.

It belongs to the AP endonuclease 2 family. It depends on Zn(2+) as a cofactor.

The catalysed reaction is Endonucleolytic cleavage to 5'-phosphooligonucleotide end-products.. Endonuclease IV plays a role in DNA repair. It cleaves phosphodiester bonds at apurinic or apyrimidinic (AP) sites, generating a 3'-hydroxyl group and a 5'-terminal sugar phosphate. The chain is Probable endonuclease 4 from Campylobacter hominis (strain ATCC BAA-381 / DSM 21671 / CCUG 45161 / LMG 19568 / NCTC 13146 / CH001A).